A 1401-amino-acid chain; its full sequence is MDGDSSSSSGGSGPAPGPGPEGEQRPEGEPLAPDGGSPDSTQTKAVPPEASPERSCSLHSCPLEDPSSSSGPPPTTSTLQPVGPSSPLAPAHFTYPRALQEYQGGSSLPGLGDRAALCSHGSSLSPSPAPSQRDGTWKPPAVQHHVVSVRQERAFQMPKSYSQLIAEWPVAVLMLCLAVIFLCTLAGLLGARLPDFSKPLLGFEPRDTDIGSKLVVWRALQALTGPRKLLFLSPDLELNSSSSHNTLRPAPRGSAQESAVRPRRMVEPLEDRRQENFFCGPPEKSYAKLVFMSTSSGSLWNLHAIHSMCRMEQDQIRSHTSFGALCQRTAANQCCPSWSLGNYLAVLSNRSSCLDTTQADAARTLALLRTCALYYHSGALVPSCLGPGQNKSPRCAQVPTKCSQSSAIYQLLHFLLDRDFLSPQTTDYQVPSLKYSLLFLPTPKGASLMDIYLDRLATPWGLADNYTSVTGMDLGLKQELLRHFLVQDTVYPLLALVAIFFGMALYLRSLFLTLMVLLGVLGSLLVAFFLYQVAFRMAYFPFVNLAALLLLSSVCANHTLIFFDLWRLSKSQLPSGGLAQRVGRTMHHFGYLLLVSGLTTSAAFYASYLSRLPAVRCLALFMGTAVLVHLALTLVWLPASAVLHERYLARGCARRARGRWEGSAPRRLLLALHRRLRGLRRAAAGTSRLLFQRLLPCGVIKFRYIWICWFAALAAGGAYIAGVSPRLRLPTLPPPGGQVFRPSHPFERFDAEYRQLFLFEQLPQGEGGHMPVVLVWGVLPVDTGDPLDPRSNSSLVRDPAFSASGPEAQRWLLALCHRARNQSFFDTLQEGWPTLCFVETLQRWMESPSCARLGPDLCCGHSDFPWAPQFFLHCLKMMALEQGPDGTQDLGLRFDAHGSLAALVLQFQTNFRNSPDYNQTQLFYNEVSHWLAAELGMAPPGLRRGWFTSRLELYSLQHSLSTEPAVVLGLALALAFATLLLGTWNVPLSLFSVAAVAGTVLLTVGLLVLLEWQLNTAEALFLSASVGLSVDFTVNYCISYHLCPHPDRLSRVAFSLRQTSCATAVGAAALFAAGVLMLPATVLLYRKLGIILMMVKCVSCGFASFFFQSLCCFFGPEKNCGQILWPCAHLPWDAGTGDPGGEKAGRPRPGSVGGMPGSCSEQYELQPLARRRSPSFDTSTATSKLSHRPSVLSEDLQLHDGPCCSRPPPAPASPRELLLDHQAVFSQCPALQTSSPYKQAGPSPKTRARQDSQGEEAEPLPASPEAPAHSPKAKAADPPDGFCSSASTLEGLSVSDETCLSTSEPSARVPDSVGVSPDDLDDTGQPVLERGQLNGKRDTLWLALRETVYDPSLPASHHSSLSWKGRGGPGDGSPVVLPNSQPDLPDVWLRRPSTHTSGYSS.

2 disordered regions span residues methionine 1–alanine 91 and aspartate 113–lysine 138. The chain crosses the membrane as a helical span at residues valine 170–glycine 190. N-linked (GlcNAc...) asparagine glycosylation is present at asparagine 239. The tract at residues serine 241–arginine 264 is disordered. N-linked (GlcNAc...) asparagine glycans are attached at residues asparagine 349 and asparagine 465. An SSD domain is found at glycine 471–leucine 643. The next 11 helical transmembrane spans lie at phenylalanine 484–alanine 504, leucine 510–leucine 530, phenylalanine 542–phenylalanine 562, phenylalanine 589–leucine 609, cysteine 617–leucine 637, tyrosine 704–serine 724, proline 964–tryptophan 984, leucine 990–leucine 1010, alanine 1019–serine 1039, alanine 1064–leucine 1084, and leucine 1088–glutamine 1108. Disordered regions lie at residues alanine 1169–leucine 1192, proline 1229–arginine 1337, and serine 1352–serine 1401. The span at serine 1175–lysine 1184 shows a compositional bias: polar residues. Over residues proline 1259 to serine 1270 the composition is skewed to low complexity. Over residues serine 1284 to proline 1305 the composition is skewed to polar residues. Residues serine 1352–serine 1362 show a composition bias toward low complexity. Position 1366 is an omega-N-methylarginine (arginine 1366).

This sequence belongs to the dispatched family.

The protein resides in the membrane. In Homo sapiens (Human), this protein is Protein dispatched homolog 2.